The sequence spans 480 residues: Lysosomal protective protein (480 aa).

The signal sequence occupies residues 1-28; that stretch reads MIRAAPPPLFLLLLLLLLLVSWASRGEA. Cystine bridges form between Cys88–Cys362, Cys240–Cys256, Cys241–Cys246, and Cys281–Cys331. N-linked (GlcNAc...) asparagine glycosylation occurs at Asn145. Ser178 is a catalytic residue. N-linked (GlcNAc...) asparagine glycosylation occurs at Asn333. Residues Asp400 and His457 contribute to the active site.

The protein belongs to the peptidase S10 family. Heterodimer of a 32 kDa chain and a 20 kDa chain; disulfide-linked.

The protein resides in the lysosome. It catalyses the reaction Release of a C-terminal amino acid with broad specificity.. Functionally, protective protein appears to be essential for both the activity of beta-galactosidase and neuraminidase, it associates with these enzymes and exerts a protective function necessary for their stability and activity. This protein is also a carboxypeptidase and can deamidate tachykinins. This Homo sapiens (Human) protein is Lysosomal protective protein (CTSA).